The primary structure comprises 494 residues: Amidophosphoribosyltransferase (494 aa).

The propeptide occupies 1–10; that stretch reads MFNYSGLNEE. Cys11 (nucleophile) is an active-site residue. The region spanning 11-231 is the Glutamine amidotransferase type-2 domain; sequence CGVFGIWNHP…AGEYVVINDK (221 aa). Ser294, Asp356, and Asp357 together coordinate Mg(2+).

It in the C-terminal section; belongs to the purine/pyrimidine phosphoribosyltransferase family. The cofactor is Mg(2+).

It carries out the reaction 5-phospho-beta-D-ribosylamine + L-glutamate + diphosphate = 5-phospho-alpha-D-ribose 1-diphosphate + L-glutamine + H2O. The protein operates within purine metabolism; IMP biosynthesis via de novo pathway; N(1)-(5-phospho-D-ribosyl)glycinamide from 5-phospho-alpha-D-ribose 1-diphosphate: step 1/2. Functionally, catalyzes the formation of phosphoribosylamine from phosphoribosylpyrophosphate (PRPP) and glutamine. The polypeptide is Amidophosphoribosyltransferase (Staphylococcus aureus (strain MRSA252)).